Consider the following 906-residue polypeptide: MAPAPSPTPLPLFLLLLLLVGVAPLAAAQGQNIQTRFPSTRTPAFATPPPITSPSPSPGTPTATPSSSPPSSSGKRSDIAVAVVSTALSSFAVSGLAFFLFLRHGKKRELTEAGGAGQHYGGAQGGALTGKRPEREPKRPARGNMVDENGLDAIYWREFEKEGDGGRGRKPPASRRPPQPPPPRPYRAERRQDAHESSAPSPPRSRKNRIDQEPLIPRGSLDSASAEFDESLYAPSAGSTSSFSVAAAEAYARPPSTPAITAVSSVPRSSPSPAPAPAARPASPSPSLPLPPGRESPSRPQSIAAAAVASPAPPPPPPPKPAAAAPPPPPPPKAAPPPPPPKGPPPPPPAKGPPPPPPPKGPSPPPPPPPGGKKGGPPPPPPKGGASRPPAAPGVPTGSADQQAKLKPLHWDKVNVAATDHSMVWDNITGGSFNLDEGIIEALFGTAAVNRKTKPADSKDASGGSTSAGLGRSNSPEQIFLLEPRKSHNISIILRSLTVGREEIIDALLNGHTELSTEVLEKLSRLNISKEEENTLLKFSGNPDRLAPAEFFLLRLLLDVPSPFARVNALLFKANYAAEVAQLKQSLRTLEMASQELRTKGLFFKLLEAVLKAGNRMNAGTARGNAQAFNLTALRKLSDVKSTDGSTTLLHFVIEEVVRSEGKRLAINRNYSLRRSGSLAKSTDGGNPAASSTSQGPSREERQNEYLNLGLPIVGGLSTEFANVKKAALVDYDTVVNECAILGNRLAGTKKLLETYGDDGFARGLRGFVKAAEQELNELKGNQEKVLELVQRTTEYYHTGATKDKNAHPLQLFIIVRDFLGMVDQACVDIKRKLQQQKKPTPPPSSSQPAAPAATTKGAADDAPAPAQKPPEEVDSKRKRVMPRFPNLPAHFMKDNADSDSSSDEE.

Residues 1-28 (MAPAPSPTPLPLFLLLLLLVGVAPLAAA) form the signal peptide. A disordered region spans residues 34-76 (QTRFPSTRTPAFATPPPITSPSPSPGTPTATPSSSPPSSSGKR). Pro residues predominate over residues 46-59 (ATPPPITSPSPSPG). Low complexity predominate over residues 60 to 73 (TPTATPSSSPPSSS). A helical transmembrane segment spans residues 81–101 (VAVVSTALSSFAVSGLAFFLF). Disordered stretches follow at residues 113–149 (AGGA…VDEN), 161–223 (KEGD…SLDS), 250–404 (AYAR…DQQA), 451–474 (RKTK…GRSN), 677–702 (GSLA…REER), and 834–906 (LQQQ…SDEE). The span at 114-128 (GGAGQHYGGAQGGAL) shows a compositional bias: gly residues. Residues 174–185 (SRRPPQPPPPRP) show a composition bias toward pro residues. Residues 186–196 (YRAERRQDAHE) are compositionally biased toward basic and acidic residues. Residues 270-294 (SPSPAPAPAARPASPSPSLPLPPGR) show a composition bias toward pro residues. Low complexity predominate over residues 295–310 (ESPSRPQSIAAAAVAS). Over residues 311-383 (PAPPPPPPPK…KGGPPPPPPK (73 aa)) the composition is skewed to pro residues. One can recognise an FH2 domain in the interval 396 to 849 (PTGSADQQAK…PTPPPSSSQP (454 aa)). 2 stretches are compositionally biased toward polar residues: residues 463–474 (GGSTSAGLGRSN) and 677–697 (GSLA…SQGP). Residues 847 to 866 (SQPAAPAATTKGAADDAPAP) show a composition bias toward low complexity.

Belongs to the formin-like family. Class-I subfamily.

The protein resides in the membrane. This Oryza sativa subsp. japonica (Rice) protein is Formin-like protein 16 (FH16).